A 255-amino-acid polypeptide reads, in one-letter code: Keratin-associated protein 10-2 (255 aa).

22 consecutive repeat copies span residues Cys-26–Pro-30, Cys-36–Ala-40, Cys-57–Ala-61, Cys-79–Ser-83, Cys-89–Ser-93, Cys-99–Val-103, Cys-104–Val-108, Cys-109–Val-113, Cys-114–Ser-118, Cys-120–Ser-124, Cys-130–Ser-134, Cys-145–Val-149, Cys-150–Thr-154, Cys-162–Ser-166, Cys-172–Ser-176, Cys-182–Val-186, Cys-187–Val-191, Cys-192–Ile-196, Cys-197–Val-201, Cys-209–Ser-213, Cys-219–Ser-223, and Cys-224–Ser-228. Residues Cys-26–Ser-228 form a 22 X 5 AA repeats of C-C-X(3) region.

The protein belongs to the KRTAP type 10 family. As to quaternary structure, interacts with hair keratins. Restricted to a narrow region of the hair fiber cuticle, lying approximately 20 cell layers above the apex of the dermal papilla of the hair root; not detected in any other tissues.

In the hair cortex, hair keratin intermediate filaments are embedded in an interfilamentous matrix, consisting of hair keratin-associated proteins (KRTAP), which are essential for the formation of a rigid and resistant hair shaft through their extensive disulfide bond cross-linking with abundant cysteine residues of hair keratins. The matrix proteins include the high-sulfur and high-glycine-tyrosine keratins. The polypeptide is Keratin-associated protein 10-2 (KRTAP10-2) (Homo sapiens (Human)).